The primary structure comprises 86 residues: Small ribosomal subunit protein bS20 (86 aa).

Over residues 1–11 the composition is skewed to polar residues; the sequence is MANIKSQIKRN. Positions 1–20 are disordered; sequence MANIKSQIKRNLTNEKRHQA.

The protein belongs to the bacterial ribosomal protein bS20 family.

Its function is as follows. Binds directly to 16S ribosomal RNA. This Acholeplasma laidlawii (strain PG-8A) protein is Small ribosomal subunit protein bS20.